Consider the following 366-residue polypeptide: Probable UDP-arabinopyranose mutase 2 (366 aa).

The DXD motif motif lies at 104 to 106 (DDD). N-linked (Glc...) arginine glycosylation is present at R152.

This sequence belongs to the RGP family. In terms of assembly, homopentamer or homohexamer. The cofactor is Mn(2+). Mg(2+) is required as a cofactor. Reversibly glycosylated by UDP-glucose, UDP-xylose and UDP-galactose, but not UDP-mannose. As to expression, expressed in all tissues tested, including root, tuber, leaf, petiole, shoot, stolon and stem.

The protein localises to the secreted. The protein resides in the cell wall. It is found in the cell junction. Its subcellular location is the plasmodesma. It localises to the golgi apparatus. It carries out the reaction UDP-beta-L-arabinofuranose = UDP-beta-L-arabinopyranose. Functionally, probable UDP-L-arabinose mutase involved in the biosynthesis of cell wall non-cellulosic polysaccharides. Was initially shown to possess an autoglycosylating activity which is dependent on the presence of UDP-glucose and manganese. The chain is Probable UDP-arabinopyranose mutase 2 from Solanum tuberosum (Potato).